The sequence spans 220 residues: Probable GTP-binding protein EngB (220 aa).

The 175-residue stretch at 31–205 (AGVEIAFAGR…LGILNEWCHP (175 aa)) folds into the EngB-type G domain. GTP is bound by residues 39–46 (GRSNAGKS), 66–70 (GRTQL), 84–87 (DLPG), 151–154 (TKAD), and 184–186 (FSS). Residues S46 and T68 each coordinate Mg(2+).

It belongs to the TRAFAC class TrmE-Era-EngA-EngB-Septin-like GTPase superfamily. EngB GTPase family. It depends on Mg(2+) as a cofactor.

In terms of biological role, necessary for normal cell division and for the maintenance of normal septation. This is Probable GTP-binding protein EngB from Shewanella sediminis (strain HAW-EB3).